Here is a 376-residue protein sequence, read N- to C-terminus: TraB domain-containing protein (376 aa).

The residue at position 1 (methionine 1) is an N-acetylmethionine. Threonine 64 bears the Phosphothreonine mark.

In Mus musculus (Mouse), this protein is TraB domain-containing protein (Trabd).